The following is a 330-amino-acid chain: Aspartate--ammonia ligase (330 aa).

The protein belongs to the class-II aminoacyl-tRNA synthetase family. AsnA subfamily.

The protein resides in the cytoplasm. It carries out the reaction L-aspartate + NH4(+) + ATP = L-asparagine + AMP + diphosphate + H(+). It participates in amino-acid biosynthesis; L-asparagine biosynthesis; L-asparagine from L-aspartate (ammonia route): step 1/1. The polypeptide is Aspartate--ammonia ligase (Streptococcus agalactiae serotype Ia (strain ATCC 27591 / A909 / CDC SS700)).